A 633-amino-acid chain; its full sequence is 1-deoxy-D-xylulose-5-phosphate synthase 2 (633 aa).

Residues H73 and 113-115 each bind thiamine diphosphate; that span reads SHA. D145 contributes to the Mg(2+) binding site. Thiamine diphosphate contacts are provided by residues 146-147, N175, Y286, and E367; that span reads GA. N175 serves as a coordination point for Mg(2+).

This sequence belongs to the transketolase family. DXPS subfamily. As to quaternary structure, homodimer. Mg(2+) serves as cofactor. The cofactor is thiamine diphosphate.

The enzyme catalyses D-glyceraldehyde 3-phosphate + pyruvate + H(+) = 1-deoxy-D-xylulose 5-phosphate + CO2. The protein operates within metabolic intermediate biosynthesis; 1-deoxy-D-xylulose 5-phosphate biosynthesis; 1-deoxy-D-xylulose 5-phosphate from D-glyceraldehyde 3-phosphate and pyruvate: step 1/1. Catalyzes the acyloin condensation reaction between C atoms 2 and 3 of pyruvate and glyceraldehyde 3-phosphate to yield 1-deoxy-D-xylulose-5-phosphate (DXP). This Kitasatospora griseola (Streptomyces griseolosporeus) protein is 1-deoxy-D-xylulose-5-phosphate synthase 2.